The sequence spans 572 residues: Secreted triacylglycerol lipase LIP6 (572 aa).

The N-terminal stretch at methionine 1–alanine 23 is a signal peptide. Cysteines 117 and 291 form a disulfide. The Nucleophile role is filled by serine 202. Aspartate 351 is an active-site residue. N-linked (GlcNAc...) asparagine glycosylation occurs at asparagine 360. Residue histidine 385 is part of the active site. A disordered region spans residues lysine 468–methionine 572. The segment covering proline 491–proline 511 has biased composition (basic and acidic residues). Residues aspartate 512–asparagine 525 show a composition bias toward low complexity. The N-linked (GlcNAc...) asparagine glycan is linked to asparagine 525. Residues alanine 528–glycine 540 show a composition bias toward basic residues. The segment covering histidine 541–glycine 562 has biased composition (low complexity). The span at serine 563–methionine 572 shows a compositional bias: basic residues.

The protein belongs to the AB hydrolase superfamily. Lipase family. Class Lip subfamily.

The protein localises to the secreted. It is found in the cell wall. It catalyses the reaction a triacylglycerol + H2O = a diacylglycerol + a fatty acid + H(+). The enzyme catalyses a monoacylglycerol + H2O = glycerol + a fatty acid + H(+). It carries out the reaction a diacylglycerol + H2O = a monoacylglycerol + a fatty acid + H(+). Its function is as follows. Secreted lipase involved in Dandruff and seborrheic dermatitis (D/SD) probably via lipase-mediated breakdown of sebaceous lipids and release of irritating free fatty acids. Shows only minimal activity against triolein. Mostly converts monoolein to di- and triolein, while free fatty acids are only produced in low amounts. The chain is Secreted triacylglycerol lipase LIP6 from Malassezia globosa (strain ATCC MYA-4612 / CBS 7966) (Dandruff-associated fungus).